We begin with the raw amino-acid sequence, 200 residues long: dITP/XTP pyrophosphatase (200 aa).

8-13 (SQNSSK) lines the substrate pocket. Positions 40 and 69 each coordinate Mg(2+). Aspartate 69 (proton acceptor) is an active-site residue. Residues serine 70, 154–157 (FGYD), lysine 177, and 182–183 (HR) each bind substrate.

It belongs to the HAM1 NTPase family. Homodimer. Mg(2+) serves as cofactor.

It catalyses the reaction XTP + H2O = XMP + diphosphate + H(+). It carries out the reaction dITP + H2O = dIMP + diphosphate + H(+). The catalysed reaction is ITP + H2O = IMP + diphosphate + H(+). Functionally, pyrophosphatase that catalyzes the hydrolysis of nucleoside triphosphates to their monophosphate derivatives, with a high preference for the non-canonical purine nucleotides XTP (xanthosine triphosphate), dITP (deoxyinosine triphosphate) and ITP. Seems to function as a house-cleaning enzyme that removes non-canonical purine nucleotides from the nucleotide pool, thus preventing their incorporation into DNA/RNA and avoiding chromosomal lesions. This chain is dITP/XTP pyrophosphatase, found in Coxiella burnetii (strain RSA 493 / Nine Mile phase I).